The sequence spans 327 residues: Zinc transport protein ZntB (327 aa).

The Cytoplasmic segment spans residues 1–273 (MEGIKGSEVN…SRRTYTMSLM (273 aa)). The helical transmembrane segment at 274–294 (AMVFLPSTFLTGLFGVNLGGI) threads the bilayer. The Periplasmic portion of the chain corresponds to 295–300 (PGGGYQ). Residues 301-321 (FGFSAFCIMLVVLIGGVAWWL) traverse the membrane as a helical segment. Over 322–327 (HRSKWL) the chain is Cytoplasmic.

The protein belongs to the CorA metal ion transporter (MIT) (TC 1.A.35) family.

Its subcellular location is the cell inner membrane. The enzyme catalyses Zn(2+)(out) + H(+)(out) = Zn(2+)(in) + H(+)(in). In terms of biological role, zinc transporter. Acts as a Zn(2+):proton symporter, which likely mediates zinc ion uptake. The chain is Zinc transport protein ZntB from Enterobacter sp. (strain 638).